The primary structure comprises 310 residues: Probable deoxyhypusine synthase (310 aa).

Residue Lys280 is the Nucleophile of the active site.

Belongs to the deoxyhypusine synthase family. The cofactor is NAD(+).

The enzyme catalyses [eIF5A protein]-L-lysine + spermidine = [eIF5A protein]-deoxyhypusine + propane-1,3-diamine. It functions in the pathway protein modification; eIF5A hypusination. In terms of biological role, catalyzes the NAD-dependent oxidative cleavage of spermidine and the subsequent transfer of the butylamine moiety of spermidine to the epsilon-amino group of a specific lysine residue of the eIF-5A precursor protein to form the intermediate deoxyhypusine residue. The protein is Probable deoxyhypusine synthase (dys) of Aeropyrum pernix (strain ATCC 700893 / DSM 11879 / JCM 9820 / NBRC 100138 / K1).